The primary structure comprises 224 residues: PKHD-type hydroxylase Shewmr4_3244 (224 aa).

One can recognise a Fe2OG dioxygenase domain in the interval 78–176 (QFYPPLFNRY…RTAAFMWLQS (99 aa)). Fe cation-binding residues include histidine 96, aspartate 98, and histidine 157. 2-oxoglutarate is bound at residue arginine 167.

Fe(2+) serves as cofactor. Requires L-ascorbate as cofactor.

The sequence is that of PKHD-type hydroxylase Shewmr4_3244 from Shewanella sp. (strain MR-4).